The sequence spans 101 residues: Ubiquitin-related modifier 1 (101 aa).

Gly-101 bears the 1-thioglycine mark. Gly-101 is covalently cross-linked (Glycyl lysine isopeptide (Gly-Lys) (interchain with K-? in acceptor proteins)).

This sequence belongs to the URM1 family. Component of a complex at least composed of URM1, CTU2/NCS2 and CTU1/ATPBD3. C-terminal thiocarboxylation occurs in 2 steps, it is first acyl-adenylated (-COAMP) via the hesA/moeB/thiF part of MOCS3, then thiocarboxylated (-COSH) via the rhodanese domain of MOCS3.

The protein resides in the cytoplasm. It participates in tRNA modification; 5-methoxycarbonylmethyl-2-thiouridine-tRNA biosynthesis. Functionally, acts as a sulfur carrier required for 2-thiolation of mcm(5)S(2)U at tRNA wobble positions of cytosolic tRNA(Lys), tRNA(Glu) and tRNA(Gln). Serves as sulfur donor in tRNA 2-thiolation reaction by being thiocarboxylated (-COSH) at its C-terminus by MOCS3. The sulfur is then transferred to tRNA to form 2-thiolation of mcm(5)S(2)U. Also acts as a ubiquitin-like protein (UBL) that is covalently conjugated via an isopeptide bond to lysine residues of target proteins such as MOCS3, ATPBD3, CTU2, USP15 and CAS. The thiocarboxylated form serves as substrate for conjugation and oxidative stress specifically induces the formation of UBL-protein conjugates. This chain is Ubiquitin-related modifier 1, found in Bos taurus (Bovine).